The primary structure comprises 508 residues: Gasdermin-C (508 aa).

The triggers pyroptosis stretch occupies residues 1–257; sequence MPSMLERISK…VGYCAARSEG (257 aa).

It belongs to the gasdermin family. In terms of assembly, homooligomer; homooligomeric ring-shaped pore complex containing 27-28 subunits when inserted in the membrane. Cleavage by CASP8 relieves autoinhibition by releasing the N-terminal moiety (Gasdermin-C, N-terminal) that initiates pyroptosis. The cleavage site is unclear. According to a publication, it takes place after Asp-240 in response to alpha-ketoglutarate. Another paper reports cleavage by CASP8 after Asp-365. Post-translationally, palmitoylated. Expressed mainly in trachea and spleen. In the esophagus, expressed in differentiating cells and probably in differentiated cells. Also detected in gastric epithelium.

It localises to the cytoplasm. The protein localises to the cytosol. Its subcellular location is the cell membrane. Its activity is regulated as follows. The full-length protein before cleavage is inactive: intramolecular interactions between N- and C-terminal domains mediate autoinhibition in the absence of activation signal. The intrinsic pyroptosis-inducing activity is carried by the released N-terminal moiety (Gasdermin-C, N-terminal) following cleavage by caspase CASP8. This form constitutes the precursor of the pore-forming protein: upon cleavage, the released N-terminal moiety (Gasdermin-C, N-terminal) binds to membranes and forms pores, triggering pyroptosis. In terms of biological role, pore-forming protein that causes membrane permeabilization and pyroptosis. Produced by the cleavage of gasdermin-C by caspase CASP8 in response to death signals. After cleavage, moves to the plasma membrane where it strongly binds to membrane inner leaflet lipids. Homooligomerizes within the membrane and forms pores of 10-15 nanometers (nm) of inner diameter, triggering pyroptosis. The chain is Gasdermin-C from Homo sapiens (Human).